A 154-amino-acid chain; its full sequence is 3-hydroxyacyl-[acyl-carrier-protein] dehydratase FabZ (154 aa).

His-60 is a catalytic residue.

It belongs to the thioester dehydratase family. FabZ subfamily.

The protein resides in the cytoplasm. It carries out the reaction a (3R)-hydroxyacyl-[ACP] = a (2E)-enoyl-[ACP] + H2O. In terms of biological role, involved in unsaturated fatty acids biosynthesis. Catalyzes the dehydration of short chain beta-hydroxyacyl-ACPs and long chain saturated and unsaturated beta-hydroxyacyl-ACPs. In Synechococcus sp. (strain CC9311), this protein is 3-hydroxyacyl-[acyl-carrier-protein] dehydratase FabZ.